The chain runs to 317 residues: ATP synthase gamma chain (317 aa).

This sequence belongs to the ATPase gamma chain family. As to quaternary structure, F-type ATPases have 2 components, CF(1) - the catalytic core - and CF(0) - the membrane proton channel. CF(1) has five subunits: alpha(3), beta(3), gamma(1), delta(1), epsilon(1). CF(0) has three main subunits: a, b and c.

It localises to the cellular thylakoid membrane. In terms of biological role, produces ATP from ADP in the presence of a proton gradient across the membrane. The gamma chain is believed to be important in regulating ATPase activity and the flow of protons through the CF(0) complex. The chain is ATP synthase gamma chain from Synechococcus sp. (strain CC9902).